The following is a 472-amino-acid chain: Pentatricopeptide repeat-containing protein At5g46100 (472 aa).

PPR repeat units follow at residues 50 to 84 (DQSSFGYMVLRLVSANKFKAAEDLIVRMKIENCVV), 85 to 119 (SEDILLSICRGYGRVHRPFDSLRVFHKMKDFDCDP), 120 to 154 (SQKAYVTVLAILVEENQLNLAFKFYKNMREIGLPP), 155 to 190 (TVASLNVLIKALCRNDGTVDAGLKIFLEMPKRGCDP), 191 to 225 (DSYTYGTLISGLCRFGRIDEAKKLFTEMVEKDCAP), 226 to 260 (TVVTYTSLINGLCGSKNVDEAMRYLEEMKSKGIEP), 261 to 295 (NVFTYSSLMDGLCKDGRSLQAMELFEMMMARGCRP), 296 to 330 (NMVTYTTLITGLCKEQKIQEAVELLDRMNLQGLKP), 331 to 365 (DAGLYGKVISGFCAISKFREAANFLDEMILGGITP), 373 to 406 (HVKTSNEVVRGLCANYPSRAFTLYLSMRSRGISV), and 407 to 441 (EVETLESLVKCLCKKGEFQKAVQLVDEIVTDGCIP).

The protein belongs to the PPR family. P subfamily.

The chain is Pentatricopeptide repeat-containing protein At5g46100 from Arabidopsis thaliana (Mouse-ear cress).